The sequence spans 275 residues: MKIELAESYGFCFGVKRAIKIAEDNKNSSTYGPLIHNSKEIERLEKDFKVGLTDDHKSFASGDKAVIRTHGIPKNELAELKANNVDVVDATCPYVTKPQQICQEMSEQGYEIIIFGDDAHPEIKGVKSYATYGARVVTMPSELEDLKLKDRIALVAQTTRKVEDYLEIANYLIPRYKEVRVFNTICNATFENQEAVRKISKKADIMIIIGGKNSSNTKQLFSISEDNCTDSYHIEDENDLDFSWFKEKKFCGISAGASTPDWIIQNVVNAIQNSI.

Cys12 is a binding site for [4Fe-4S] cluster. The (2E)-4-hydroxy-3-methylbut-2-enyl diphosphate site is built by His36 and His70. Positions 36 and 70 each coordinate dimethylallyl diphosphate. The isopentenyl diphosphate site is built by His36 and His70. A [4Fe-4S] cluster-binding site is contributed by Cys92. Residue His120 participates in (2E)-4-hydroxy-3-methylbut-2-enyl diphosphate binding. His120 lines the dimethylallyl diphosphate pocket. His120 provides a ligand contact to isopentenyl diphosphate. Glu122 serves as the catalytic Proton donor. Residue Thr158 participates in (2E)-4-hydroxy-3-methylbut-2-enyl diphosphate binding. Cys186 serves as a coordination point for [4Fe-4S] cluster. Residues Ser214, Ser215, Asn216, and Ser258 each contribute to the (2E)-4-hydroxy-3-methylbut-2-enyl diphosphate site. Ser214, Ser215, Asn216, and Ser258 together coordinate dimethylallyl diphosphate. Isopentenyl diphosphate is bound by residues Ser214, Ser215, Asn216, and Ser258.

The protein belongs to the IspH family. The cofactor is [4Fe-4S] cluster.

It catalyses the reaction isopentenyl diphosphate + 2 oxidized [2Fe-2S]-[ferredoxin] + H2O = (2E)-4-hydroxy-3-methylbut-2-enyl diphosphate + 2 reduced [2Fe-2S]-[ferredoxin] + 2 H(+). The enzyme catalyses dimethylallyl diphosphate + 2 oxidized [2Fe-2S]-[ferredoxin] + H2O = (2E)-4-hydroxy-3-methylbut-2-enyl diphosphate + 2 reduced [2Fe-2S]-[ferredoxin] + 2 H(+). Its pathway is isoprenoid biosynthesis; dimethylallyl diphosphate biosynthesis; dimethylallyl diphosphate from (2E)-4-hydroxy-3-methylbutenyl diphosphate: step 1/1. It participates in isoprenoid biosynthesis; isopentenyl diphosphate biosynthesis via DXP pathway; isopentenyl diphosphate from 1-deoxy-D-xylulose 5-phosphate: step 6/6. Functionally, catalyzes the conversion of 1-hydroxy-2-methyl-2-(E)-butenyl 4-diphosphate (HMBPP) into a mixture of isopentenyl diphosphate (IPP) and dimethylallyl diphosphate (DMAPP). Acts in the terminal step of the DOXP/MEP pathway for isoprenoid precursor biosynthesis. The sequence is that of 4-hydroxy-3-methylbut-2-enyl diphosphate reductase from Sulfurimonas denitrificans (strain ATCC 33889 / DSM 1251) (Thiomicrospira denitrificans (strain ATCC 33889 / DSM 1251)).